A 316-amino-acid chain; its full sequence is Epiphycan (316 aa).

Residues 1 to 23 form the signal peptide; the sequence is MKTFVNIFLGFFIFESVGAVPIT. O-linked (Xyl...) (dermatan sulfate) serine glycosylation occurs at S98. Positions 100 to 137 constitute an LRRNT domain; it reads VLVPQTQDGLPTCLLCTCLGTTVYCDDRELDAVPPLPK. C112 and C124 form a disulfide bridge. LRR repeat units follow at residues 138-159, 162-183, 186-207, 232-252, 253-274, and 284-304; these read NTMY…DFAN, NLKR…AFRR, QLLE…PSTL, ELQH…PLPE, SLQA…TFCK, and ALED…PYAY. C273 and C306 form a disulfide bridge. N296 is a glycosylation site (N-linked (GlcNAc...) asparagine).

Belongs to the small leucine-rich proteoglycan (SLRP) family. SLRP class III subfamily. Post-translationally, the O-linked glycosaminoglycan chain(s) are dermatan sulfate. As to expression, preferentially expressed in flattened chondrocytes of developing chick limb cartilage. Also found in the cartilage peripheral zone bordering with bone marrow cavity.

The protein resides in the secreted. The protein localises to the extracellular space. It localises to the extracellular matrix. In terms of biological role, may have a role in bone formation and also in establishing the ordered structure of cartilage through matrix organization. The sequence is that of Epiphycan (EPYC) from Gallus gallus (Chicken).